A 736-amino-acid chain; its full sequence is DNA topoisomerase 4 subunit A (736 aa).

Residues 32–496 enclose the Topo IIA-type catalytic domain; sequence LPDVRDGLKP…SFEQVTLTNQ (465 aa). Y120 functions as the O-(5'-phospho-DNA)-tyrosine intermediate in the catalytic mechanism.

It belongs to the type II topoisomerase GyrA/ParC subunit family. ParC type 1 subfamily. In terms of assembly, heterotetramer composed of ParC and ParE.

It localises to the cell membrane. The enzyme catalyses ATP-dependent breakage, passage and rejoining of double-stranded DNA.. Functionally, topoisomerase IV is essential for chromosome segregation. It relaxes supercoiled DNA. Performs the decatenation events required during the replication of a circular DNA molecule. This chain is DNA topoisomerase 4 subunit A, found in Rickettsia bellii (strain RML369-C).